Reading from the N-terminus, the 344-residue chain is Glutamine synthetase (344 aa).

In terms of domain architecture, GS beta-grasp spans 4 to 86 (YKLEYIWLDG…VMCEVMMPDG (83 aa)). The 256-residue stretch at 89 to 344 (PHASNKRATI…SVPTEKKAVA (256 aa)) folds into the GS catalytic domain. Residues Glu-109 and Glu-111 each coordinate Mg(2+). Position 167 (Glu-167) interacts with ATP. Glu-172 and Glu-179 together coordinate Mg(2+). An L-glutamate-binding site is contributed by Glu-278.

Belongs to the glutamine synthetase family. As to quaternary structure, homooctamer and homotetramer. The cofactor is Mg(2+).

The protein localises to the cytoplasm. It catalyses the reaction L-glutamate + NH4(+) + ATP = L-glutamine + ADP + phosphate + H(+). In terms of biological role, catalyzes the ATP-dependent biosynthesis of glutamine from glutamate and ammonia. This chain is Glutamine synthetase, found in Bradyrhizobium diazoefficiens (strain JCM 10833 / BCRC 13528 / IAM 13628 / NBRC 14792 / USDA 110).